Reading from the N-terminus, the 2924-residue chain is Probable polyketide synthase 6 (2924 aa).

In terms of domain architecture, Ketosynthase family 3 (KS3) spans 11-442 (EKGVAIVGIG…GSNCCLLISE (432 aa)). Active-site for beta-ketoacyl synthase activity residues include Cys-181, His-323, and His-362. The tract at residues 635-668 (GVNPSFILGHSLGEISASYCSGMIDLDTFCYTVY) is acyl/malonyl transferase. Ser-645 serves as the catalytic For acyl/malonyl transferase activity. The N-terminal hotdog fold stretch occupies residues 925 to 1047 (IDHLGLSNSY…SNFQLLDHGN (123 aa)). In terms of domain architecture, PKS/mFAS DH spans 925-1210 (IDHLGLSNSY…CKSLIPIKDS (286 aa)). The active-site Proton acceptor; for dehydratase activity is His-959. The segment at 1064 to 1210 (NLSKLTKNEL…CKSLIPIKDS (147 aa)) is C-terminal hotdog fold. The Proton donor; for dehydratase activity role is filled by Asp-1122. The Carrier domain occupies 2431–2508 (TGNKNIDELF…ISIKMILNSL (78 aa)). The residue at position 2468 (Ser-2468) is an O-(pantetheine 4'-phosphoryl)serine. A helical membrane pass occupies residues 2551 to 2571 (KIILLTGTTGFLGGFLLFNML).

It depends on pantetheine 4'-phosphate as a cofactor.

It is found in the membrane. Functionally, probable polyketide synthase. This is Probable polyketide synthase 6 (pks6) from Dictyostelium discoideum (Social amoeba).